Reading from the N-terminus, the 341-residue chain is Eukaryotic translation initiation factor 3 subunit I (341 aa).

WD repeat units lie at residues 8 to 49 (GHER…GTYH), 50 to 91 (GHQG…HTWE), 145 to 184 (CDESKATVAGWSYLAKYIIAGHEDGSVSQYDAKNGDQLHS), 189 to 228 (DMGSEIRDLQWSQDRTYFITASKDKTAKLVTARDLEVLKT), and 286 to 325 (GHFGPLNYVAAEPNGKGYASGGEDGYVRVHQFDKGYFDFM).

This sequence belongs to the eIF-3 subunit I family. In terms of assembly, component of the eukaryotic translation initiation factor 3 (eIF-3) complex.

It localises to the cytoplasm. In terms of biological role, component of the eukaryotic translation initiation factor 3 (eIF-3) complex, which is involved in protein synthesis of a specialized repertoire of mRNAs and, together with other initiation factors, stimulates binding of mRNA and methionyl-tRNAi to the 40S ribosome. The eIF-3 complex specifically targets and initiates translation of a subset of mRNAs involved in cell proliferation. The protein is Eukaryotic translation initiation factor 3 subunit I of Pyricularia oryzae (strain 70-15 / ATCC MYA-4617 / FGSC 8958) (Rice blast fungus).